A 405-amino-acid chain; its full sequence is Intraflagellar transport protein 57 homolog (405 aa).

Residues 252-380 (ETLKTNILEN…AQLNLEVALL (129 aa)) are a coiled coil.

This sequence belongs to the IFT57 family.

Its subcellular location is the cytoplasm. The protein resides in the cytoskeleton. The protein localises to the cilium basal body. Its function is as follows. Required for the formation of cilia. In Drosophila melanogaster (Fruit fly), this protein is Intraflagellar transport protein 57 homolog.